Reading from the N-terminus, the 89-residue chain is Small ribosomal subunit protein uS15 (89 aa).

The protein belongs to the universal ribosomal protein uS15 family. In terms of assembly, part of the 30S ribosomal subunit. Forms a bridge to the 50S subunit in the 70S ribosome, contacting the 23S rRNA.

Its function is as follows. One of the primary rRNA binding proteins, it binds directly to 16S rRNA where it helps nucleate assembly of the platform of the 30S subunit by binding and bridging several RNA helices of the 16S rRNA. In terms of biological role, forms an intersubunit bridge (bridge B4) with the 23S rRNA of the 50S subunit in the ribosome. The sequence is that of Small ribosomal subunit protein uS15 from Desulfosudis oleivorans (strain DSM 6200 / JCM 39069 / Hxd3) (Desulfococcus oleovorans).